The primary structure comprises 207 residues: Reticulon-1-A (207 aa).

The region spanning 21-207 is the Reticulon domain; sequence AIDLLYWRDI…AKIPGTKQKE (187 aa). The next 2 helical transmembrane spans lie at 35–55 and 139–159; these read IVFG…VVSV and VLMW…LLIM.

In terms of tissue distribution, expressed in the animal hemisphere (presumptive neural ectoderm) of blastula and gastrula stage embryos, and along the anterior neural border, in the panplacodal primordium, and in the dorsolateral side of archenteron roof of late neurula embryos. At the tailbud stage, expression localizes to the central nervous system, including the spinal cord, prosencephalon, mesencephalon and rhombencephalon, as well as the lateral line placode, otic vesicle and pronephros.

The protein resides in the endoplasmic reticulum membrane. It localises to the nucleus. In terms of biological role, inhibits amyloid precursor protein processing, probably by blocking BACE1 activity. The polypeptide is Reticulon-1-A (rtn1-a) (Xenopus laevis (African clawed frog)).